A 346-amino-acid chain; its full sequence is Uroporphyrinogen decarboxylase (346 aa).

Substrate contacts are provided by residues 23-27, aspartate 72, tyrosine 155, serine 209, and histidine 322; that span reads RQAGR.

The protein belongs to the uroporphyrinogen decarboxylase family. In terms of assembly, homodimer.

It is found in the cytoplasm. The catalysed reaction is uroporphyrinogen III + 4 H(+) = coproporphyrinogen III + 4 CO2. It functions in the pathway porphyrin-containing compound metabolism; protoporphyrin-IX biosynthesis; coproporphyrinogen-III from 5-aminolevulinate: step 4/4. Its function is as follows. Catalyzes the decarboxylation of four acetate groups of uroporphyrinogen-III to yield coproporphyrinogen-III. The chain is Uroporphyrinogen decarboxylase from Anaeromyxobacter dehalogenans (strain 2CP-C).